A 352-amino-acid chain; its full sequence is Protein RecA (352 aa).

65 to 72 serves as a coordination point for ATP; sequence GPESSGKT.

This sequence belongs to the RecA family.

The protein resides in the cytoplasm. Its function is as follows. Can catalyze the hydrolysis of ATP in the presence of single-stranded DNA, the ATP-dependent uptake of single-stranded DNA by duplex DNA, and the ATP-dependent hybridization of homologous single-stranded DNAs. It interacts with LexA causing its activation and leading to its autocatalytic cleavage. This is Protein RecA from Pseudomonas fluorescens (strain Pf0-1).